We begin with the raw amino-acid sequence, 283 residues long: Protein/nucleic acid deglycase HchA (283 aa).

Zn(2+)-binding residues include histidine 86, glutamate 91, and histidine 123. Catalysis depends on cysteine 185, which acts as the Nucleophile.

This sequence belongs to the peptidase C56 family. HchA subfamily. In terms of assembly, homodimer.

The protein localises to the cytoplasm. The enzyme catalyses N(omega)-(1-hydroxy-2-oxopropyl)-L-arginyl-[protein] + H2O = lactate + L-arginyl-[protein] + H(+). The catalysed reaction is N(6)-(1-hydroxy-2-oxopropyl)-L-lysyl-[protein] + H2O = lactate + L-lysyl-[protein] + H(+). It carries out the reaction S-(1-hydroxy-2-oxopropyl)-L-cysteinyl-[protein] + H2O = lactate + L-cysteinyl-[protein] + H(+). It catalyses the reaction N(omega)-(1-hydroxy-2-oxoethyl)-L-arginyl-[protein] + H2O = L-arginyl-[protein] + glycolate + H(+). The enzyme catalyses N(6)-(1-hydroxy-2-oxoethyl)-L-lysyl-[protein] + H2O = glycolate + L-lysyl-[protein] + H(+). The catalysed reaction is S-(1-hydroxy-2-oxoethyl)-L-cysteinyl-[protein] + H2O = glycolate + L-cysteinyl-[protein] + H(+). It carries out the reaction N(2)-(1-hydroxy-2-oxopropyl)-dGTP + H2O = lactate + dGTP + H(+). It catalyses the reaction N(2)-(1-hydroxy-2-oxopropyl)-GTP + H2O = lactate + GTP + H(+). The enzyme catalyses N(2)-(1-hydroxy-2-oxopropyl)-GDP + H2O = lactate + GDP + H(+). The catalysed reaction is N(2)-(1-hydroxy-2-oxopropyl)-GMP + H2O = lactate + GMP + H(+). It carries out the reaction N(2)-(1-hydroxy-2-oxoethyl)-dGTP + H2O = dGTP + glycolate + H(+). It catalyses the reaction N(2)-(1-hydroxy-2-oxoethyl)-GTP + H2O = glycolate + GTP + H(+). The enzyme catalyses N(2)-(1-hydroxy-2-oxoethyl)-GDP + H2O = glycolate + GDP + H(+). The catalysed reaction is N(2)-(1-hydroxy-2-oxoethyl)-GMP + H2O = glycolate + GMP + H(+). It carries out the reaction an N(2)-(1-hydroxy-2-oxopropyl)-guanosine in RNA + H2O = a guanosine in RNA + lactate + H(+). It catalyses the reaction an N(2)-(1-hydroxy-2-oxopropyl)-2'-deoxyguanosine in DNA + H2O = a 2'-deoxyguanosine in DNA + lactate + H(+). The enzyme catalyses an N(2)-(1-hydroxy-2-oxoethyl)-guanosine in RNA + H2O = a guanosine in RNA + glycolate + H(+). The catalysed reaction is an N(2)-(1-hydroxy-2-oxoethyl)-2'-deoxyguanosine in DNA + H2O = a 2'-deoxyguanosine in DNA + glycolate + H(+). In terms of biological role, protein and nucleotide deglycase that catalyzes the deglycation of the Maillard adducts formed between amino groups of proteins or nucleotides and reactive carbonyl groups of glyoxals. Thus, functions as a protein deglycase that repairs methylglyoxal- and glyoxal-glycated proteins, and releases repaired proteins and lactate or glycolate, respectively. Deglycates cysteine, arginine and lysine residues in proteins, and thus reactivates these proteins by reversing glycation by glyoxals. Acts on early glycation intermediates (hemithioacetals and aminocarbinols), preventing the formation of Schiff bases and advanced glycation endproducts (AGE). Also functions as a nucleotide deglycase able to repair glycated guanine in the free nucleotide pool (GTP, GDP, GMP, dGTP) and in DNA and RNA. Is thus involved in a major nucleotide repair system named guanine glycation repair (GG repair), dedicated to reversing methylglyoxal and glyoxal damage via nucleotide sanitization and direct nucleic acid repair. Plays an important role in protecting cells from carbonyl stress. The sequence is that of Protein/nucleic acid deglycase HchA from Escherichia coli (strain 55989 / EAEC).